The primary structure comprises 176 residues: NADH-dependent flavin reductase (176 aa).

Residues 39–46 and 48–49 each bind FAD; these read EDSVHGMT and NA. Residue Ser-52 participates in NAD(+) binding. FAD contacts are provided by residues 63–65, 69–70, and 95–96; these read SIS, KM, and HF. NAD(+)-binding positions include His-137 and 157 to 160; that span reads FYTG.

The protein belongs to the non-flavoprotein flavin reductase family. Homodimer. 4-nitrophenol 2-monooxygenase complex consists of an oxygenase component NphA1 and a flavin reductase component NphA2.

It catalyses the reaction a reduced flavin + NAD(+) = an oxidized flavin + NADH + 2 H(+). Functionally, catalyzes the reduction of FAD with the concomitant oxidation of NADH. NAD is the physiological electron donor. Subsequently, the reduced flavins diffuse to the oxygenase component NphA2. The protein is NADH-dependent flavin reductase (nphA2) of Rhodococcus sp.